The following is a 356-amino-acid chain: Probable scoulerine-9-O-methyltransferase OMT2B (356 aa).

Met173 serves as a coordination point for S-adenosyl-L-methionine. Residue Asp176 participates in substrate binding. S-adenosyl-L-methionine is bound by residues Thr177, Gly202, Asp225, 245–246, and Lys259; that span reads DI. 260-264 serves as a coordination point for substrate; the sequence is YVLHN. His263 functions as the Proton acceptor in the catalytic mechanism.

This sequence belongs to the class I-like SAM-binding methyltransferase superfamily. Cation-independent O-methyltransferase family. COMT subfamily.

It catalyses the reaction (S)-scoulerine + S-adenosyl-L-methionine = (S)-tetrahydrocolumbamine + S-adenosyl-L-homocysteine + H(+). It participates in alkaloid biosynthesis. Functionally, methyltransferase involved in the biosynthesis of the benzylisoquinoline alkaloid noscapine. Catalyzes the conversion of (S)-scoulerine to (S)-tetrahydrocolumbamine. The heterodimers OMT2B-SOMT3 and OMT2B-6OMT do not possess 3-O-acetyl-4'-O-demethylpapaveroxine 4'-O-methyltransferase activity. The chain is Probable scoulerine-9-O-methyltransferase OMT2B from Papaver somniferum (Opium poppy).